Reading from the N-terminus, the 98-residue chain is Post-transcriptional regulator ComN (98 aa).

Interacts directly with DivIVA.

The protein localises to the cytoplasm. Required for post-transcription initiation control of the comE operon. Promotes the accumulation of its target comE mRNA to septal and polar sites. This Bacillus subtilis (strain 168) protein is Post-transcriptional regulator ComN (comN).